We begin with the raw amino-acid sequence, 836 residues long: Pentatricopeptide repeat-containing protein At1g79490, mitochondrial (836 aa).

A mitochondrion-targeting transit peptide spans 1–85; the sequence is MIRGRTAKVI…QCRSIVRRFC (85 aa). PPR repeat units lie at residues 204–238, 242–276, 277–311, 312–346, 347–381, 382–416, 417–451, 452–486, 487–521, 528–555, 556–590, and 591–625; these read SDEC…SSSH, SFNA…GCKI, DTQT…DSLL, DGST…KLRP, SFSV…GHRP, SATM…GFRP, NFGL…GFLP, TPST…GLRP, GLSS…GYSV, VLMI…GIKT, NNFI…AGKV, and DLVL…KHKA. In terms of domain architecture, Smr spans 710 to 786; that stretch reads LDVRNLSVGA…APGELVMEWF (77 aa).

The protein belongs to the PPR family. P subfamily.

It localises to the mitochondrion. This Arabidopsis thaliana (Mouse-ear cress) protein is Pentatricopeptide repeat-containing protein At1g79490, mitochondrial (EMB2217).